Here is a 525-residue protein sequence, read N- to C-terminus: 2-isopropylmalate synthase (525 aa).

The Pyruvate carboxyltransferase domain occupies 12–274; sequence VVIFDTTLRD…WNKIDTTQLT (263 aa). D21, H209, H211, and N245 together coordinate Mn(2+). The tract at residues 398-525 is regulatory domain; the sequence is KLLSLSVIAG…GHGASAAAAS (128 aa).

It belongs to the alpha-IPM synthase/homocitrate synthase family. LeuA type 1 subfamily. In terms of assembly, homodimer. The cofactor is Mn(2+).

The protein resides in the cytoplasm. It catalyses the reaction 3-methyl-2-oxobutanoate + acetyl-CoA + H2O = (2S)-2-isopropylmalate + CoA + H(+). It functions in the pathway amino-acid biosynthesis; L-leucine biosynthesis; L-leucine from 3-methyl-2-oxobutanoate: step 1/4. Catalyzes the condensation of the acetyl group of acetyl-CoA with 3-methyl-2-oxobutanoate (2-ketoisovalerate) to form 3-carboxy-3-hydroxy-4-methylpentanoate (2-isopropylmalate). This is 2-isopropylmalate synthase from Bradyrhizobium sp. (strain ORS 278).